The following is a 128-amino-acid chain: Large ribosomal subunit protein bL12 (128 aa).

This sequence belongs to the bacterial ribosomal protein bL12 family. In terms of assembly, homodimer. Part of the ribosomal stalk of the 50S ribosomal subunit. Forms a multimeric L10(L12)X complex, where L10 forms an elongated spine to which 2 to 4 L12 dimers bind in a sequential fashion. Binds GTP-bound translation factors.

Forms part of the ribosomal stalk which helps the ribosome interact with GTP-bound translation factors. Is thus essential for accurate translation. The chain is Large ribosomal subunit protein bL12 from Trichormus variabilis (strain ATCC 29413 / PCC 7937) (Anabaena variabilis).